A 122-amino-acid chain; its full sequence is Large ribosomal subunit protein uL18 (122 aa).

The span at 1 to 19 (MSTLSRKQKTQKRHKRLRR) shows a compositional bias: basic residues. Positions 1–26 (MSTLSRKQKTQKRHKRLRRNLSGTDQ) are disordered.

Belongs to the universal ribosomal protein uL18 family. In terms of assembly, part of the 50S ribosomal subunit; part of the 5S rRNA/L5/L18/L25 subcomplex. Contacts the 5S and 23S rRNAs.

Functionally, this is one of the proteins that bind and probably mediate the attachment of the 5S RNA into the large ribosomal subunit, where it forms part of the central protuberance. In Prochlorococcus marinus (strain SARG / CCMP1375 / SS120), this protein is Large ribosomal subunit protein uL18.